Reading from the N-terminus, the 96-residue chain is Protein Vpr (96 aa).

The tract at residues 1 to 42 is homooligomerization; the sequence is MEQAPGDQGPQREPYNEWALEILEELKNEAVRHFPRPWLHGL. Residues S79, S94, and S96 each carry the phosphoserine; by host modification.

It belongs to the HIV-1 VPR protein family. Homooligomer, may form homodimer. Interacts with p6-gag region of the Pr55 Gag precursor protein through a (Leu-X-X)4 motif near the C-terminus of the P6gag protein. Interacts with host UNG. May interact with host RAD23A/HHR23A. Interacts with host VPRBP/DCAF1, leading to hijack the CUL4A-RBX1-DDB1-DCAF1/VPRBP complex, mediating ubiquitination of host proteins such as TERT and ZGPAT and arrest of the cell cycle in G2 phase. In terms of processing, phosphorylated on several residues by host. These phosphorylations regulate VPR activity for the nuclear import of the HIV-1 pre-integration complex.

It localises to the virion. The protein localises to the host nucleus. The protein resides in the host extracellular space. Its function is as follows. During virus replication, may deplete host UNG protein, and incude G2-M cell cycle arrest. Acts by targeting specific host proteins for degradation by the 26S proteasome, through association with the cellular CUL4A-DDB1 E3 ligase complex by direct interaction with host VPRPB/DCAF-1. Cell cycle arrest reportedly occurs within hours of infection and is not blocked by antiviral agents, suggesting that it is initiated by the VPR carried into the virion. Additionally, VPR induces apoptosis in a cell cycle dependent manner suggesting that these two effects are mechanistically linked. Detected in the serum and cerebrospinal fluid of AIDS patient, VPR may also induce cell death to bystander cells. In terms of biological role, during virus entry, plays a role in the transport of the viral pre-integration (PIC) complex to the host nucleus. This function is crucial for viral infection of non-dividing macrophages. May act directly at the nuclear pore complex, by binding nucleoporins phenylalanine-glycine (FG)-repeat regions. This is Protein Vpr from Human immunodeficiency virus type 1 group M subtype F1 (isolate VI850) (HIV-1).